The primary structure comprises 59 residues: Thrombostatin (59 aa).

4 disulfide bridges follow: cysteine 3/cysteine 22, cysteine 17/cysteine 37, cysteine 39/cysteine 51, and cysteine 52/cysteine 57. The short motif at 43–45 (RGD) is the Cell attachment site element.

The protein belongs to the three-finger toxin family. Short-chain subfamily. Antiplatelet toxin sub-subfamily. In terms of tissue distribution, expressed by the venom gland.

The protein localises to the secreted. Functionally, inhibits ADP-induced platelet aggregation and inhibits the binding of purified platelet fibrinogen receptor alpha-IIb/beta-3 (ITGA2B/ITGB3) to immobilized fibrinogen. The sequence is that of Thrombostatin from Dendroaspis angusticeps (Eastern green mamba).